The chain runs to 367 residues: Probable outer membrane usher protein LpfC (367 aa).

The first 30 residues, 1–30 (MSRKTVSRTFSSFSISVVAVAVASTFSAHA), serve as a signal peptide directing secretion.

It belongs to the fimbrial export usher family.

It localises to the cell outer membrane. In terms of biological role, part of the lpfABCC'DE fimbrial operon. LP fimbriae may participate in the interaction with eukaryotic cells by assisting in microcolony formation. Could be involved in the export and assembly of the fimbrial subunits across the outer membrane. In Escherichia coli O157:H7, this protein is Probable outer membrane usher protein LpfC (lpfC).